The sequence spans 160 residues: Phosphopantetheine adenylyltransferase (160 aa).

A substrate-binding site is contributed by threonine 11. ATP is bound by residues 11–12 and histidine 19; that span reads TF. Residues lysine 43, threonine 75, and arginine 89 each coordinate substrate. Residues 90 to 92, glutamate 100, and 125 to 131 contribute to the ATP site; these read GLR and YSFLSSS.

This sequence belongs to the bacterial CoaD family. Homohexamer. Mg(2+) serves as cofactor.

It localises to the cytoplasm. It carries out the reaction (R)-4'-phosphopantetheine + ATP + H(+) = 3'-dephospho-CoA + diphosphate. The protein operates within cofactor biosynthesis; coenzyme A biosynthesis; CoA from (R)-pantothenate: step 4/5. Its function is as follows. Reversibly transfers an adenylyl group from ATP to 4'-phosphopantetheine, yielding dephospho-CoA (dPCoA) and pyrophosphate. This is Phosphopantetheine adenylyltransferase from Listeria monocytogenes serotype 4b (strain CLIP80459).